An 863-amino-acid chain; its full sequence is MASLFSDFGFIWYWKELNKIEFMYFKELLIHEILQMGLKQISWTEVKEASREDLAILLVKHCDGNQAWDTTFRVFQMIGRNVITNRATGEIAAHSTIYRAHLKEKLTHDCSRKFNISIQNFFQDEYDHLENLLVPNGTENNPKMVVLQGVAGIGKTILLKNLMIVWSEGLVFQNKFSYIFYFCCHDVKQLQTASLADLISREWPSPSAPMEEILSQPEKLLFIIDSLEGMEWNVTQQDSQLCYNCMEKQPVNVLLSSLLRKKILPESSLLISTSCETFKDLKDWIEYTNVRTITGFKENNINMCFHSLFQDRNIAQEAFSLIRENEQLFTVCQAPVVCYMVATCLKNEIESGKDPVSICRRTTSLYTTHILNLFIPHNAQNPSNNSEDLLDNLCFLAVEGMWTDISVFNEEALRRNGIMDSDIPTLLDIGILEQSRESENSYIFLHPSVQEFCAAMFYLLHSEMDHSCQGVYFIETFLFTFLNKIKKQWVFLGCFFFGLLHETEQEKLEAFFGYHLSKELRRQLFLWLELLLDTLHPDVKKINTMKFFYCLFEMEEEVFVQSAMNCREQIDVVVKGYSDFIVAAYCLSHGSALTDFSISAQNVLNEELGQRGKLLILWHQICSVFLRNKDIKTLRIEDTIFNEPVFKIFYSYLKNSSCILKTLVAYNVSFLCDKRLFLELIQSYNLEELYLRGTFLSHSDVEMLCDILNQAECNIRILDLANCSLCEHSWDYLSDVLRQNKSLRYLNISYNNLKDEGLKALCRALTLPNSALHSLSLEACQLTGACCKDLASTFTRYKCLRRINLAKNSLGFSGLFVLCKAMKDQTCTLYELKLRMADFDSDSQEFLLSEMERNKILSIENGV.

A Pyrin domain is found at 1–93 (MASLFSDFGF…TNRATGEIAA (93 aa)). An NACHT domain is found at 143–466 (KMVVLQGVAG…FYLLHSEMDH (324 aa)). 149–156 (GVAGIGKT) contributes to the ATP binding site. 7 LRR repeats span residues 618-643 (WHQI…IFNE), 683-706 (SYNL…MLCD), 717-740 (ILDL…LRQN), 741-763 (KSLR…ALCR), 765-782 (LTLP…ACQL), 797-824 (YKCL…AMKD), and 843-863 (SQEF…ENGV).

The protein belongs to the NLRP family.

In terms of biological role, may be involved in inflammation and recognition of cytosolic pathogen-associated molecular patterns (PAMPs) not intercepted by membrane-bound receptors. The sequence is that of NACHT, LRR and PYD domains-containing protein 4B (Nlrp4b) from Mus musculus (Mouse).